Consider the following 265-residue polypeptide: tRNA pseudouridine synthase A (265 aa).

The active-site Nucleophile is Asp55. A substrate-binding site is contributed by Tyr113.

It belongs to the tRNA pseudouridine synthase TruA family. In terms of assembly, homodimer.

It carries out the reaction uridine(38/39/40) in tRNA = pseudouridine(38/39/40) in tRNA. In terms of biological role, formation of pseudouridine at positions 38, 39 and 40 in the anticodon stem and loop of transfer RNAs. The polypeptide is tRNA pseudouridine synthase A (Levilactobacillus brevis (strain ATCC 367 / BCRC 12310 / CIP 105137 / JCM 1170 / LMG 11437 / NCIMB 947 / NCTC 947) (Lactobacillus brevis)).